A 293-amino-acid chain; its full sequence is 4-hydroxy-tetrahydrodipicolinate synthase (293 aa).

Position 50 (T50) interacts with pyruvate. The active-site Proton donor/acceptor is Y138. The active-site Schiff-base intermediate with substrate is K166. V206 is a pyruvate binding site.

The protein belongs to the DapA family. Homotetramer; dimer of dimers.

The protein localises to the cytoplasm. It catalyses the reaction L-aspartate 4-semialdehyde + pyruvate = (2S,4S)-4-hydroxy-2,3,4,5-tetrahydrodipicolinate + H2O + H(+). It participates in amino-acid biosynthesis; L-lysine biosynthesis via DAP pathway; (S)-tetrahydrodipicolinate from L-aspartate: step 3/4. Catalyzes the condensation of (S)-aspartate-beta-semialdehyde [(S)-ASA] and pyruvate to 4-hydroxy-tetrahydrodipicolinate (HTPA). This chain is 4-hydroxy-tetrahydrodipicolinate synthase, found in Cutibacterium acnes (strain DSM 16379 / KPA171202) (Propionibacterium acnes).